The following is a 330-amino-acid chain: Trans-1,2-dihydrobenzene-1,2-diol dehydrogenase (330 aa).

It belongs to the Gfo/Idh/MocA family. Homodimer.

The enzyme catalyses (1R,2R)-1,2-dihydrobenzene-1,2-diol + NADP(+) = catechol + NADPH + H(+). The catalysed reaction is D-xylose + NADP(+) = D-xylono-1,5-lactone + NADPH + H(+). The polypeptide is Trans-1,2-dihydrobenzene-1,2-diol dehydrogenase (dhdh) (Xenopus laevis (African clawed frog)).